Here is a 289-residue protein sequence, read N- to C-terminus: 4-diphosphocytidyl-2-C-methyl-D-erythritol kinase (289 aa).

The active site involves Lys-16. 99 to 109 is a binding site for ATP; that stretch reads PMGGGIGGGSS. Asp-141 is a catalytic residue.

Belongs to the GHMP kinase family. IspE subfamily.

It carries out the reaction 4-CDP-2-C-methyl-D-erythritol + ATP = 4-CDP-2-C-methyl-D-erythritol 2-phosphate + ADP + H(+). It participates in isoprenoid biosynthesis; isopentenyl diphosphate biosynthesis via DXP pathway; isopentenyl diphosphate from 1-deoxy-D-xylulose 5-phosphate: step 3/6. Catalyzes the phosphorylation of the position 2 hydroxy group of 4-diphosphocytidyl-2C-methyl-D-erythritol. The sequence is that of 4-diphosphocytidyl-2-C-methyl-D-erythritol kinase from Ralstonia nicotianae (strain ATCC BAA-1114 / GMI1000) (Ralstonia solanacearum).